The primary structure comprises 279 residues: Diaminopimelate epimerase (279 aa).

Substrate contacts are provided by asparagine 11 and asparagine 63. Catalysis depends on cysteine 72, which acts as the Proton donor. Substrate contacts are provided by residues 73–74, asparagine 161, asparagine 194, and 212–213; these read GN and ER. Cysteine 221 (proton acceptor) is an active-site residue. Position 222–223 (222–223) interacts with substrate; the sequence is GT.

This sequence belongs to the diaminopimelate epimerase family. As to quaternary structure, homodimer.

The protein localises to the cytoplasm. The catalysed reaction is (2S,6S)-2,6-diaminopimelate = meso-2,6-diaminopimelate. It participates in amino-acid biosynthesis; L-lysine biosynthesis via DAP pathway; DL-2,6-diaminopimelate from LL-2,6-diaminopimelate: step 1/1. In terms of biological role, catalyzes the stereoinversion of LL-2,6-diaminopimelate (L,L-DAP) to meso-diaminopimelate (meso-DAP), a precursor of L-lysine and an essential component of the bacterial peptidoglycan. This is Diaminopimelate epimerase from Moorella thermoacetica (strain ATCC 39073 / JCM 9320).